Here is a 285-residue protein sequence, read N- to C-terminus: Eukaryotic translation initiation factor 3 subunit F-2 (285 aa).

The region spanning 11–145 is the MPN domain; sequence VVLQPLVLFQ…TRLYCGVEMG (135 aa).

The protein belongs to the eIF-3 subunit F family. Component of the eukaryotic translation initiation factor 3 (eIF-3) complex. The eIF-3 complex interacts with pix.

It is found in the cytoplasm. Component of the eukaryotic translation initiation factor 3 (eIF-3) complex, which is involved in protein synthesis of a specialized repertoire of mRNAs and, together with other initiation factors, stimulates binding of mRNA and methionyl-tRNAi to the 40S ribosome. The eIF-3 complex specifically targets and initiates translation of a subset of mRNAs involved in cell proliferation. The protein is Eukaryotic translation initiation factor 3 subunit F-2 of Drosophila ananassae (Fruit fly).